The primary structure comprises 193 residues: MGPWWALWLILTLPQILESQISAMSQGFPQMTSFQSDQFQGEWFVLGLADNTFRREHRALLNFFTTLFELKEKSQFQVTNSMTRGKHCNTWSYTLIPATKPGQFTRDNRGSGPGADRENIQVIETDYITFALVLSLRQTSSQNITRVSLLGRNWRLSHKTIDKFICLTRTQNLTKDNFLFPDLSDWLPDPQVC.

Residues 1-19 (MGPWWALWLILTLPQILES) form the signal peptide. Cys88 and Cys193 are oxidised to a cystine. Asn143 and Asn172 each carry an N-linked (GlcNAc...) asparagine glycan.

Belongs to the calycin superfamily. Lipocalin family. In terms of assembly, monomer. As to expression, expressed in epididymis.

It localises to the secreted. Its function is as follows. Binds all-trans retinoic acid and may act as a retinoid carrier protein within the epididymis. May play a role in male fertility. This Mus musculus (Mouse) protein is Epididymal-specific lipocalin-12 (Lcn12).